The primary structure comprises 239 residues: Isopentenyl-diphosphate Delta-isomerase (239 aa).

Position 43 (K43) interacts with substrate. Mg(2+) contacts are provided by H47 and H58. The region spanning 56 to 210 is the Nudix hydrolase domain; that stretch reads LLHRAFSIFL…KVKVTPWFRL (155 aa). The substrate site is built by R77 and K81. C93 is a catalytic residue. S94 contributes to the substrate binding site. Mg(2+)-binding residues include E156 and E158. The active site involves E158.

It belongs to the IPP isomerase type 1 family. Mg(2+) serves as cofactor.

The enzyme catalyses isopentenyl diphosphate = dimethylallyl diphosphate. The protein operates within isoprenoid biosynthesis; dimethylallyl diphosphate biosynthesis; dimethylallyl diphosphate from isopentenyl diphosphate: step 1/1. Its function is as follows. Catalyzes the 1,3-allylic rearrangement of the homoallylic substrate isopentenyl (IPP) to its highly electrophilic allylic isomer, dimethylallyl diphosphate (DMAPP). This chain is Isopentenyl-diphosphate Delta-isomerase (ipi), found in Dictyostelium discoideum (Social amoeba).